Consider the following 493-residue polypeptide: Cysteine--tRNA ligase (493 aa).

C29 provides a ligand contact to Zn(2+). The short motif at 31–41 (VTVYDLCHLGH) is the 'HIGH' region element. A disordered region spans residues 154-179 (KLSGRDPDDQQQGASGRTADGEESRK). Residues C213, H238, and E242 each contribute to the Zn(2+) site. The short motif at 270–274 (KMSKS) is the 'KMSKS' region element. K273 contributes to the ATP binding site.

It belongs to the class-I aminoacyl-tRNA synthetase family. Monomer. Zn(2+) is required as a cofactor.

The protein resides in the cytoplasm. It carries out the reaction tRNA(Cys) + L-cysteine + ATP = L-cysteinyl-tRNA(Cys) + AMP + diphosphate. In Synechococcus sp. (strain CC9605), this protein is Cysteine--tRNA ligase.